A 196-amino-acid polypeptide reads, in one-letter code: Peroxiredoxin TSA2 (196 aa).

Residues 3 to 161 form the Thioredoxin domain; sequence AEVQKQAPPF…ALRLVEGFQW (159 aa). Lys14 participates in a covalent cross-link: Glycyl lysine isopeptide (Lys-Gly) (interchain with G-Cter in ubiquitin). Residue Cys48 is the Cysteine sulfenic acid (-SOH) intermediate of the active site. Residues Lys89 and Lys132 each participate in a glycyl lysine isopeptide (Lys-Gly) (interchain with G-Cter in ubiquitin) cross-link. Position 174 is a phosphothreonine (Thr174).

The protein belongs to the peroxiredoxin family. AhpC/Prx1 subfamily. In terms of assembly, homodimer; disulfide-linked, upon oxidation.

It localises to the cytoplasm. The catalysed reaction is a hydroperoxide + [thioredoxin]-dithiol = an alcohol + [thioredoxin]-disulfide + H2O. Thiol-specific peroxidase that catalyzes the reduction of hydrogen peroxide and organic hydroperoxides to water and alcohols, respectively. Plays a role in cell protection against oxidative stress by detoxifying peroxides and as sensor of hydrogen peroxide-mediated signaling events. Can act alternatively as peroxidase and molecular chaperone. Oxidative stress and heat shock exposure cause a reversible shift of the protein structure from low MW species to high MW complexes, triggering a peroxidase-to-chaperone functional switch. The chaperone function of the protein enhances resistance to heat shock. In Saccharomyces cerevisiae (strain ATCC 204508 / S288c) (Baker's yeast), this protein is Peroxiredoxin TSA2.